Consider the following 334-residue polypeptide: Protein-methionine-sulfoxide reductase catalytic subunit MsrP (334 aa).

The tat-type signal signal peptide spans 1–44; that stretch reads MKKNQFLKESDVTAESVFFMKRRQVLKALGISATALSLPHAAHA. Mo-molybdopterin contacts are provided by residues Asn-88, 91 to 92, Cys-146, Thr-181, Asn-233, Arg-238, and 249 to 251; these read YE and GIK.

This sequence belongs to the MsrP family. As to quaternary structure, heterodimer of a catalytic subunit (MsrP) and a heme-binding subunit (MsrQ). The cofactor is Mo-molybdopterin. Post-translationally, predicted to be exported by the Tat system. The position of the signal peptide cleavage has not been experimentally proven.

Its subcellular location is the periplasm. The catalysed reaction is L-methionyl-[protein] + a quinone + H2O = L-methionyl-(S)-S-oxide-[protein] + a quinol. It catalyses the reaction L-methionyl-[protein] + a quinone + H2O = L-methionyl-(R)-S-oxide-[protein] + a quinol. Its function is as follows. Part of the MsrPQ system that repairs oxidized periplasmic proteins containing methionine sulfoxide residues (Met-O), using respiratory chain electrons. Thus protects these proteins from oxidative-stress damage caused by reactive species of oxygen and chlorine generated by the host defense mechanisms. MsrPQ is essential for the maintenance of envelope integrity under bleach stress, rescuing a wide series of structurally unrelated periplasmic proteins from methionine oxidation, including the primary periplasmic chaperone SurA and the lipoprotein Pal. The catalytic subunit MsrP is non-stereospecific, being able to reduce both (R-) and (S-) diastereoisomers of methionine sulfoxide. This chain is Protein-methionine-sulfoxide reductase catalytic subunit MsrP, found in Escherichia coli (strain K12 / MC4100 / BW2952).